We begin with the raw amino-acid sequence, 29 residues long: Dermaseptin-J6 (29 aa).

Position 29 is a valine amide (Val29).

In terms of tissue distribution, expressed by the skin glands.

The protein resides in the secreted. Has antimicrobial activity. The protein is Dermaseptin-J6 of Phasmahyla jandaia (Jandaia leaf frog).